Consider the following 1502-residue polypeptide: Heme-responsive zinc finger transcription factor HAP1 (1502 aa).

Residues 1-50 are compositionally biased toward polar residues; it reads MSNTPYNSSVPSIASMTQSSVSRSPNMHTATTPGANTSSNSPPLHMSSDS. Residues 1–56 are disordered; the sequence is MSNTPYNSSVPSIASMTQSSVSRSPNMHTATTPGANTSSNSPPLHMSSDSSKIKRK. Zn(2+) contacts are provided by Cys-64, Cys-67, Cys-74, Cys-81, Cys-84, and Cys-93. Residues 64–93 constitute a DNA-binding region (zn(2)-C6 fungal-type); sequence CTICRKRKVKCDKLRPHCQQCTKTGVAHLC. Residues 105–134 are a coiled coil; that stretch reads EKELLKDNELKKLRERVKSLEKTLSKVHSS. The segment at 126–208 is disordered; that stretch reads KTLSKVHSSP…ANSSSLSISN (83 aa). The segment covering 130 to 142 has biased composition (low complexity); that stretch reads KVHSSPSSNSLKS. 2 stretches are compositionally biased toward polar residues: residues 143–152 and 160–176; these read YNTPESSNLF and TLVN…SHMH. Residues 177–208 show a composition bias toward low complexity; it reads QQQQQQQQQEQQQDFSRSANANANSSSLSISN. The segment at 244–444 is heme-responsive; required for HMC formation; the sequence is KGDPYLKLLW…NTIPHHQPQS (201 aa). 6 HRM repeats span residues 280-285, 299-304, 323-328, 347-352, 389-394, and 415-420; these read KCPINH, KCPVDH, RCPVDH, and RCPIDH. Polar residues-rich tracts occupy residues 432-447 and 706-734; these read STHN…SGSH and QLNA…NPTL. 2 disordered regions span residues 432–458 and 706–767; these read STHN…SRKH and QLNA…KENQ. Positions 735-759 are enriched in low complexity; it reads NNNMSAATTNSSSRSGSADSRSGSN. One copy of the HRM 7 repeat lies at 1192 to 1197; that stretch reads KCPVYQ. The disordered stretch occupies residues 1384–1411; it reads TANTDTSANGSALSTLTSPQGSDLASNS. Positions 1388–1411 are enriched in polar residues; that stretch reads DTSANGSALSTLTSPQGSDLASNS.

In terms of assembly, binds DNA as a homodimer. Interacts with SRO9 and YDJ1. In the absence of heme, binds to at least four cellular proteins, including YDJ1 and SRO9, forming a high-molecular-weight complex (HMC) which results in repression of its activity and dictates its DNA-binding specificity.

The protein localises to the nucleus. Regulation of oxygen dependent gene expression. It modulates the expression of Iso-1 (CYP1) and Iso-2 (CYP3) cytochrome c. In response to heme, promotes transcription of genes encoding functions required for respiration, controlling oxidative damage and repression of anaerobic genes. Binds to the sequence 5'-CGGNNNTNNCGG-3'. Is non-functional in terms of iso-1 cytochrome c expression in strain S288c and its derivatives. This chain is Heme-responsive zinc finger transcription factor HAP1 (HAP1), found in Saccharomyces cerevisiae (strain ATCC 204508 / S288c) (Baker's yeast).